Here is a 210-residue protein sequence, read N- to C-terminus: Putative tyrosine-protein phosphatase OCA1 (210 aa).

Positions 44-204 (NFCPVERYLY…EIDREKAPNW (161 aa)) constitute a Tyrosine-protein phosphatase domain. Catalysis depends on C140, which acts as the Phosphocysteine intermediate.

It belongs to the protein-tyrosine phosphatase family.

Its subcellular location is the cytoplasm. It catalyses the reaction O-phospho-L-tyrosyl-[protein] + H2O = L-tyrosyl-[protein] + phosphate. Functionally, putative tyrosine-protein phosphatase required for protection against superoxide stress. The protein is Putative tyrosine-protein phosphatase OCA1 (OCA1) of Kluyveromyces lactis (strain ATCC 8585 / CBS 2359 / DSM 70799 / NBRC 1267 / NRRL Y-1140 / WM37) (Yeast).